Here is a 206-residue protein sequence, read N- to C-terminus: MSSLDELIQKARMLLSEGHSPGQIADELSLSMETVTWLLTQKKGDTAPKDVHIDWTVVSSNGHLLDGIASLMIERYYCAHPFESVEGQCPSLGSNAIVGIALSGVPLATLIAQKEQMKLAIYHPAKHSSGENPVGSISGNFSQVGGENAIIVDDVITSGRTMHEVVRYLRRHKATPLAIWVLFDKLGIKEVEGVPVYSVFTISRID.

Belongs to the purine/pyrimidine phosphoribosyltransferase family. GfcR subfamily.

This Methanosphaerula palustris (strain ATCC BAA-1556 / DSM 19958 / E1-9c) protein is Transcriptional regulator GfcR.